Reading from the N-terminus, the 231-residue chain is Ureidoacrylate amidohydrolase RutB (231 aa).

Residue aspartate 25 is the Proton acceptor of the active site. Residue lysine 134 is part of the active site. Cysteine 167 functions as the Nucleophile in the catalytic mechanism.

The protein belongs to the isochorismatase family. RutB subfamily.

The catalysed reaction is (Z)-3-ureidoacrylate + H2O + H(+) = (Z)-3-aminoacrylate + NH4(+) + CO2. The enzyme catalyses (Z)-3-ureidoacrylate + H2O = (Z)-3-aminoacrylate + carbamate + H(+). It carries out the reaction (Z)-2-methylureidoacrylate + H2O + H(+) = (Z)-2-methylaminoacrylate + NH4(+) + CO2. Functionally, hydrolyzes ureidoacrylate to form aminoacrylate and carbamate. The carbamate hydrolyzes spontaneously, thereby releasing one of the nitrogen atoms of the pyrimidine ring as ammonia and one of its carbon atoms as CO2. The polypeptide is Ureidoacrylate amidohydrolase RutB (Escherichia coli (strain SMS-3-5 / SECEC)).